A 355-amino-acid polypeptide reads, in one-letter code: Lamassu protein LmuA (355 aa).

Functionally, component of antiviral defense system Lamassu type II, composed of LmuA and LmuB. Expression of Lamassu type II in B.subtilis (strain BEST7003) confers resistance to phage SpBeta. May be a nuclease. The polypeptide is Lamassu protein LmuA (Bacillus cereus (strain VD014)).